Here is a 201-residue protein sequence, read N- to C-terminus: Diadenylate cyclase CdaS (201 aa).

A DAC domain is found at 54-201 (QTLAATYYIQ…LNGILYTISL (148 aa)).

Belongs to the adenylate cyclase family. DacB/CdaS subfamily. Probably forms a homohexamer. Mg(2+) is required as a cofactor.

It carries out the reaction 2 ATP = 3',3'-c-di-AMP + 2 diphosphate. One of 3 paralogous diadenylate cyclases (DAC) in this bacteria catalyzing the condensation of 2 ATP molecules into cyclic di-AMP (c-di-AMP). It has slow DAC activity with ADP as a substrate and may have weak ADPase activity. Required for efficient spore formation, whereas in B.subtilis, it is required for efficient spore germination. It is produced under the control of different sigma factors in the two bacteria. It is also required for parasporal crystal formation. The sequence is that of Diadenylate cyclase CdaS from Bacillus thuringiensis (strain BMB171).